A 599-amino-acid chain; its full sequence is MWSTISISMNVAILKKPLNFLHNSNNKASNPRCVSSTRRRPSCPLQLDVEPRRSGNYQPSAWDFNYIQSLNNNHSKEERHLERKAKLIEEVKMLLEQEMAAVQQLELIEDLKNLGLSYLFQDEIKIILNSIYNHHKCFHNNHEQCIHVNSDLYFVALGFRLFRQHGFKVSQEVFDCFKNEEGSDFSANLADDTKGLLQLYEASYLVTEDEDTLEMARQFSTKILQKKVEEKMIEKENLLSWTLHSLELPLHWRIQRLEAKWFLDAYASRPDMNPIIFELAKLEFNIAQALQQEELKDLSRWWNDTGIAEKLPFARDRIVESHYWAIGTLEPYQYRYQRSLIAKIIALTTVVDDVYDVYGTLDELQLFTDAIRRWDIESINQLPSYMQLCYLAIYNFVSELAYDIFRDKGFNSLPYLHKSWLDLVEAYFVEAKWFHDGYTPTLEEYLNNSKITIICPAIVSEIYFAFANSIDKTEVESIYKYHDILYLSGMLARLPDDLGTSSFEMKRGDVAKAIQCYMKEHNASEEEAREHIRFLMREAWKHMNTAAAADDCPFESDLVVGAASLGRVANFVYVEGDGFGVQHSKIHQQMAELLFYPYQ.

The N-terminal 34 residues, 1-34 (MWSTISISMNVAILKKPLNFLHNSNNKASNPRCV), are a transit peptide targeting the chloroplast. Positions 352, 356, 496, 500, and 504 each coordinate Mg(2+). The DDXXD motif signature appears at 352 to 356 (DDVYD).

It belongs to the terpene synthase family. It depends on Mg(2+) as a cofactor. Mn(2+) serves as cofactor.

The protein resides in the plastid. It is found in the chloroplast. It carries out the reaction (2E)-geranyl diphosphate = beta-myrcene + diphosphate. It participates in secondary metabolite biosynthesis; terpenoid biosynthesis. Functionally, monoterpene synthase that catalyzes the formation of beta-myrcene from geranyl diphosphate. This Ocimum basilicum (Sweet basil) protein is Beta-myrcene synthase, chloroplastic (MYS).